The sequence spans 106 residues: Large ribosomal subunit protein eL30 (106 aa).

Belongs to the eukaryotic ribosomal protein eL30 family.

This chain is Large ribosomal subunit protein eL30 (rpl30e), found in Sulfurisphaera tokodaii (strain DSM 16993 / JCM 10545 / NBRC 100140 / 7) (Sulfolobus tokodaii).